We begin with the raw amino-acid sequence, 201 residues long: Anthranilate synthase component II (201 aa).

Residues 3-196 form the Glutamine amidotransferase type-1 domain; that stretch reads DILLLDNIDS…LAWAQRKLEP (194 aa). Residue 57–59 participates in L-glutamine binding; it reads GPG. The active-site Nucleophile; for GATase activity is Cys-84. L-glutamine-binding positions include Gln-88 and 134–135; that span reads SL. Residues His-170 and Glu-172 each act as for GATase activity in the active site.

Tetramer of two components I and two components II.

It carries out the reaction chorismate + L-glutamine = anthranilate + pyruvate + L-glutamate + H(+). The catalysed reaction is N-(5-phospho-beta-D-ribosyl)anthranilate + diphosphate = 5-phospho-alpha-D-ribose 1-diphosphate + anthranilate. It participates in amino-acid biosynthesis; L-tryptophan biosynthesis; L-tryptophan from chorismate: step 1/5. It functions in the pathway amino-acid biosynthesis; L-tryptophan biosynthesis; L-tryptophan from chorismate: step 2/5. In Shigella dysenteriae, this protein is Anthranilate synthase component II (trpG-TRPD).